A 1441-amino-acid chain; its full sequence is uncharacterized protein (1441 aa).

Disordered stretches follow at residues 1–95 (MGFL…EVIS), 150–204 (NGGI…QQQF), 224–289 (KPHQ…GEGE), 401–477 (HSNG…QLHQ), 529–661 (RHES…QPQQ), 680–760 (LNKD…KSQT), 776–810 (RKSS…HIQQ), 849–899 (QQQF…TQQL), 980–1118 (RGGS…DNNN), 1161–1185 (KSLK…NENN), 1209–1321 (NIES…YRSY), 1348–1402 (GHNS…HIFF), and 1421–1441 (LKFN…SILE). The segment covering 19–38 (NDNSFDGGSSSYNNNNNNNN) has biased composition (low complexity). Positions 39-56 (QPITYTPTAIRSPNNKTM) are enriched in polar residues. Low complexity-rich tracts occupy residues 57–91 (SQSQ…GNGN), 153–187 (ISQP…TTTP), 227–283 (QQQQ…SLQN), 416–445 (NNNN…GINN), 555–564 (GNTDGVNIDN), and 572–635 (NNNN…TNNT). Residues 636–645 (ATPSVINGDS) show a composition bias toward polar residues. Low complexity-rich tracts occupy residues 648–661 (QEQP…QPQQ) and 680–700 (LNKD…DDNN). Positions 703 to 720 (SREEMENILKKSQQDSNK) are enriched in basic and acidic residues. Over residues 729-751 (EDSNSGSPTFQDFQSSAAASNVS) the composition is skewed to polar residues. Low complexity-rich tracts occupy residues 780-810 (DSLN…HIQQ) and 849-880 (QQQF…NSGS). Over residues 881–892 (INGGSNSGGGGV) the composition is skewed to gly residues. The segment covering 981–994 (GGSTNRTTPPFLTP) has biased composition (polar residues). Over residues 995 to 1067 (NTSQTNLSSL…NKQTANNTTN (73 aa)) the composition is skewed to low complexity. The span at 1068–1087 (DFSFDQNTDLRSSTNSLTIG) shows a compositional bias: polar residues. Positions 1088–1118 (SNSNFSSLKNSLNLENPENNNNPDKNVDNNN) are enriched in low complexity. Low complexity-rich tracts occupy residues 1225 to 1249 (DNNN…SLRN) and 1257 to 1291 (NISN…NNNE). Basic and acidic residues predominate over residues 1362 to 1373 (RHKDSIGDKEMD).

This is an uncharacterized protein from Dictyostelium discoideum (Social amoeba).